We begin with the raw amino-acid sequence, 227 residues long: UPF0173 metal-dependent hydrolase BCAH187_A4741 (227 aa).

The protein belongs to the UPF0173 family.

This is UPF0173 metal-dependent hydrolase BCAH187_A4741 from Bacillus cereus (strain AH187).